Here is a 318-residue protein sequence, read N- to C-terminus: NADH-ubiquinone oxidoreductase chain 1 (318 aa).

Transmembrane regions (helical) follow at residues 5–25 (IISS…LTLI), 69–89 (SIFL…ILWI), 102–122 (LGLM…LTSG), 148–168 (LGLM…KLFI), 174–194 (IWLL…TLAE), 215–235 (VEFS…NILF), 253–273 (LYFS…FLWV), and 293–313 (FLPI…FFGV).

This sequence belongs to the complex I subunit 1 family.

Its subcellular location is the mitochondrion inner membrane. It catalyses the reaction a ubiquinone + NADH + 5 H(+)(in) = a ubiquinol + NAD(+) + 4 H(+)(out). In terms of biological role, core subunit of the mitochondrial membrane respiratory chain NADH dehydrogenase (Complex I) that is believed to belong to the minimal assembly required for catalysis. Complex I functions in the transfer of electrons from NADH to the respiratory chain. The immediate electron acceptor for the enzyme is believed to be ubiquinone. The sequence is that of NADH-ubiquinone oxidoreductase chain 1 (MT-ND1) from Myxine glutinosa (Atlantic hagfish).